The chain runs to 437 residues: Adenosylhomocysteinase (437 aa).

Residues Thr54, Asp125, and Glu170 each contribute to the substrate site. 171-173 (TTT) contributes to the NAD(+) binding site. Lys200 and Asp204 together coordinate substrate. NAD(+)-binding positions include Asn205, 234–239 (GYGWVG), Glu258, Asn293, 314–316 (AGH), and Asn361.

It belongs to the adenosylhomocysteinase family. NAD(+) is required as a cofactor.

The protein localises to the cytoplasm. It carries out the reaction S-adenosyl-L-homocysteine + H2O = L-homocysteine + adenosine. Its pathway is amino-acid biosynthesis; L-homocysteine biosynthesis; L-homocysteine from S-adenosyl-L-homocysteine: step 1/1. Functionally, may play a key role in the regulation of the intracellular concentration of adenosylhomocysteine. This Pyrobaculum aerophilum (strain ATCC 51768 / DSM 7523 / JCM 9630 / CIP 104966 / NBRC 100827 / IM2) protein is Adenosylhomocysteinase.